The primary structure comprises 258 residues: MIPPADSLLKYDTPVLVSRNTEKRSPKARPLKVTVQQPGPSGAGPQPPKAKLPSTSCVPDPTKQAEEILNAILPPREWVEDTQLWIQQVSSTPSTRMDVVHLQEQLDLKLQQRQARETGICPVRRELYSQCFDELIREVTINCAERGLLLLRVRDEIRMTIAAYQTLYESSVAFGMRKALQAEQGKSDMERKITELETEKRDLERQVNEQKAKCEATEKRESERRQVEEKKHNEEIQFLKRTNQQLKAQLEGIIAPKK.

Disordered stretches follow at residues 1–60 (MIPP…CVPD) and 202–231 (DLERQVNEQKAKCEATEKRESERRQVEEKK). The stretch at 176–255 (MRKALQAEQG…LKAQLEGIIA (80 aa)) forms a coiled coil.

This sequence belongs to the inner dynein arm light chain family. In terms of assembly, interacts with CFAP45. Interacts with DYNC1H1.

It is found in the cell projection. It localises to the cilium. Its subcellular location is the flagellum. The protein localises to the dynein axonemal particle. The protein resides in the cytoplasm. Functionally, involved in sperm flagellum assembly. This Rattus norvegicus (Rat) protein is Axonemal dynein light intermediate polypeptide 1.